We begin with the raw amino-acid sequence, 456 residues long: tRNA modification GTPase MnmE (456 aa).

Positions 21, 85, and 124 each coordinate (6S)-5-formyl-5,6,7,8-tetrahydrofolate. The TrmE-type G domain maps to 220-379 (QLRIVLYGEP…LLDEIQKKAA (160 aa)). Asparagine 230 is a binding site for K(+). GTP contacts are provided by residues 230–235 (NTGKSS), 249–255 (SEIPGTT), and 274–277 (DTAG). Residue serine 234 participates in Mg(2+) binding. 3 residues coordinate K(+): serine 249, isoleucine 251, and threonine 254. Threonine 255 provides a ligand contact to Mg(2+). Residue lysine 456 coordinates (6S)-5-formyl-5,6,7,8-tetrahydrofolate.

It belongs to the TRAFAC class TrmE-Era-EngA-EngB-Septin-like GTPase superfamily. TrmE GTPase family. As to quaternary structure, homodimer. Heterotetramer of two MnmE and two MnmG subunits. It depends on K(+) as a cofactor.

It localises to the cytoplasm. Exhibits a very high intrinsic GTPase hydrolysis rate. Involved in the addition of a carboxymethylaminomethyl (cmnm) group at the wobble position (U34) of certain tRNAs, forming tRNA-cmnm(5)s(2)U34. In Leptospira borgpetersenii serovar Hardjo-bovis (strain JB197), this protein is tRNA modification GTPase MnmE.